The chain runs to 396 residues: S100P-binding protein (396 aa).

The tract at residues 145–249 (CDPVLDKDKI…RKNSGSHKSG (105 aa)) is disordered. Composition is skewed to basic and acidic residues over residues 148–161 (VLDK…KETE) and 168–185 (EQTR…RCTE). Composition is skewed to polar residues over residues 202–215 (SSPS…TASD) and 227–246 (VFSQ…SGSH).

As to quaternary structure, interacts with S100P.

The protein resides in the nucleus. The sequence is that of S100P-binding protein from Mus musculus (Mouse).